The chain runs to 486 residues: Ribulose bisphosphate carboxylase large chain (486 aa).

Residues Asn125 and Thr175 each contribute to the substrate site. The Proton acceptor role is filled by Lys177. Substrate is bound at residue Lys179. Mg(2+)-binding residues include Lys203, Asp205, and Glu206. Lys203 is subject to N6-carboxylysine. Catalysis depends on His295, which acts as the Proton acceptor. Residues Arg296, His328, and Ser380 each coordinate substrate.

It belongs to the RuBisCO large chain family. Type I subfamily. In terms of assembly, heterohexadecamer of 8 large chains and 8 small chains. The cofactor is Mg(2+).

The catalysed reaction is 2 (2R)-3-phosphoglycerate + 2 H(+) = D-ribulose 1,5-bisphosphate + CO2 + H2O. The enzyme catalyses D-ribulose 1,5-bisphosphate + O2 = 2-phosphoglycolate + (2R)-3-phosphoglycerate + 2 H(+). RuBisCO catalyzes two reactions: the carboxylation of D-ribulose 1,5-bisphosphate, the primary event in carbon dioxide fixation, as well as the oxidative fragmentation of the pentose substrate. Both reactions occur simultaneously and in competition at the same active site. The chain is Ribulose bisphosphate carboxylase large chain from Cereibacter sphaeroides (Rhodobacter sphaeroides).